The sequence spans 726 residues: Putative RNA polymerase II subunit B1 CTD phosphatase RPAP2 homolog (726 aa).

Residues 43 to 131 form an RTR1-type zinc finger; that stretch reads AAASLLSGPD…LPPDRPFGVS (89 aa). Residues Cys-66, Cys-71, Cys-107, and Cys-111 each contribute to the Zn(2+) site. Residues 209 to 218 show a composition bias toward basic and acidic residues; that stretch reads VGGPKKEAKQ. Disordered regions lie at residues 209-242 and 294-323; these read VGGP…SGES and KKDK…GRDG. The span at 220 to 241 shows a compositional bias: polar residues; it reads DACSAEQSSNINVDSRNASSGE.

This sequence belongs to the RPAP2 family.

It is found in the nucleus. It catalyses the reaction O-phospho-L-seryl-[protein] + H2O = L-seryl-[protein] + phosphate. The catalysed reaction is O-phospho-L-threonyl-[protein] + H2O = L-threonyl-[protein] + phosphate. Putative RNA polymerase II subunit B1 C-terminal domain (CTD) phosphatase involved in RNA polymerase II transcription regulation. The sequence is that of Putative RNA polymerase II subunit B1 CTD phosphatase RPAP2 homolog from Oryza sativa subsp. japonica (Rice).